The sequence spans 714 residues: Fatty acid oxidation complex subunit alpha (714 aa).

Residues 1–190 (MEMASAFTLN…KLGLVDDVVP (190 aa)) are enoyl-CoA hydratase. The 3-hydroxyacyl-CoA dehydrogenase stretch occupies residues 306–714 (APLNSVGILG…FWKTTATDLQ (409 aa)).

The protein in the N-terminal section; belongs to the enoyl-CoA hydratase/isomerase family. It in the central section; belongs to the 3-hydroxyacyl-CoA dehydrogenase family. Heterotetramer of two alpha chains (FadJ) and two beta chains (FadI).

It is found in the cytoplasm. The enzyme catalyses a (3S)-3-hydroxyacyl-CoA = a (2E)-enoyl-CoA + H2O. It carries out the reaction a 4-saturated-(3S)-3-hydroxyacyl-CoA = a (3E)-enoyl-CoA + H2O. It catalyses the reaction a (3S)-3-hydroxyacyl-CoA + NAD(+) = a 3-oxoacyl-CoA + NADH + H(+). The catalysed reaction is (3S)-3-hydroxybutanoyl-CoA = (3R)-3-hydroxybutanoyl-CoA. Its pathway is lipid metabolism; fatty acid beta-oxidation. In terms of biological role, catalyzes the formation of a hydroxyacyl-CoA by addition of water on enoyl-CoA. Also exhibits 3-hydroxyacyl-CoA epimerase and 3-hydroxyacyl-CoA dehydrogenase activities. The protein is Fatty acid oxidation complex subunit alpha of Shigella boydii serotype 4 (strain Sb227).